The chain runs to 151 residues: Deoxyuridine 5'-triphosphate nucleotidohydrolase (151 aa).

Residues 69–71 (RSG), Asn-82, and 86–88 (TID) each bind substrate.

It belongs to the dUTPase family. Requires Mg(2+) as cofactor.

It carries out the reaction dUTP + H2O = dUMP + diphosphate + H(+). The protein operates within pyrimidine metabolism; dUMP biosynthesis; dUMP from dCTP (dUTP route): step 2/2. This enzyme is involved in nucleotide metabolism: it produces dUMP, the immediate precursor of thymidine nucleotides and it decreases the intracellular concentration of dUTP so that uracil cannot be incorporated into DNA. The chain is Deoxyuridine 5'-triphosphate nucleotidohydrolase from Rhodospirillum centenum (strain ATCC 51521 / SW).